The sequence spans 105 residues: Circadian clock oscillator protein KaiB1 (105 aa).

It belongs to the KaiB family. Homotetramer in solution and crystals formed by 2 dimers. Only elutes as a homotetramer in size exclusion chromatography, interacts with KaiC1 and KaiC3. The KaiABC complex composition changes during the circadian cycle to control KaiC phosphorylation. Complexes KaiC(6), KaiA(2-4):KaiC(6), KaiB(6):KaiC(6) and KaiC(6):KaiB(6):KaiA(12) are among the most important forms, many form cooperatively. Undergoes a major conformational rearrangment; in the free state forms homotetramers as a dimer of dimers. When bound to the CI domain of KaiC switches to a monomeric thioredoxin-fold (KaiB(fs)). KaiB(fs) binds CikA, leading it to dephosphorylate phospho-RpaA.

Key component of the KaiABC oscillator complex, which constitutes the main circadian regulator in cyanobacteria. Complex composition changes during the circadian cycle to control KaiC phosphorylation. KaiA stimulates KaiC autophosphorylation, while KaiB sequesters KaiA, leading to KaiC autodephosphorylation. Phospho-Ser-431 KaiC accumulation triggers binding of KaiB to form the KaiB(6):KaiC(6) complex, leading to changes in output regulators CikA and SasA. KaiB switches to a thioredoxin-like fold (KaiB(fs)) when bound to KaiC. KaiB(6):KaiC(6) formation exposes a site for KaiA binding that sequesters KaiA from KaiC, making the KaiC(6):KaiB(6):KaiA(12) complex that results in KaiC autodephosphorylation. Its function is as follows. Component of the oscillator and circadian clock in this organism, enhances fitness in a rhythmic environment. The homotetramer reduces the ATPase activity of KaiC3 by 35%. In terms of biological role, a metamorphic protein which reversibly switches between an inactive tetrameric fold and a rare, thioredoxin-like monomeric fold (KaiB(fs)). KaiB(fs) binds phospho-KaiC, KaiA and CikA. KaiA and CikA compete for binding to KaiB(fs), and KaiB(fs) and SasA compete for binding to KaiC, thus the clock oscillator and output signal pathway are tightly coupled. This chain is Circadian clock oscillator protein KaiB1, found in Synechocystis sp. (strain ATCC 27184 / PCC 6803 / Kazusa).